The chain runs to 390 residues: uncharacterized protein (390 aa).

Belongs to the peptidase M24 family.

This is an uncharacterized protein from Sinorhizobium fredii (strain NBRC 101917 / NGR234).